The following is a 203-amino-acid chain: Ribonuclease HII (203 aa).

The RNase H type-2 domain occupies 15–201; sequence LLVAGLDEAG…VAQAPLRFPE (187 aa). Positions 21, 22, and 111 each coordinate a divalent metal cation.

It belongs to the RNase HII family. Mn(2+) is required as a cofactor. It depends on Mg(2+) as a cofactor.

Its subcellular location is the cytoplasm. It catalyses the reaction Endonucleolytic cleavage to 5'-phosphomonoester.. Functionally, endonuclease that specifically degrades the RNA of RNA-DNA hybrids. This chain is Ribonuclease HII, found in Thermus thermophilus (strain ATCC BAA-163 / DSM 7039 / HB27).